A 168-amino-acid polypeptide reads, in one-letter code: Coiled-coil domain-containing protein 200 (168 aa).

Residues 16 to 50 (LDRRRWLMAQQQQELQQKEQELKNHQEEEQQSEEK) adopt a coiled-coil conformation. The tract at residues 23–168 (MAQQQQELQQ…LKSTNYIQQW (146 aa)) is disordered. The segment covering 31–52 (QQKEQELKNHQEEEQQSEEKLQ) has biased composition (basic and acidic residues). Positions 70–82 (SQEQPQPSQQQPS) are enriched in low complexity. 2 stretches are compositionally biased toward pro residues: residues 83 to 94 (VQPPSQPPPQPS) and 104 to 117 (GPQP…PQPT). 2 stretches are compositionally biased toward polar residues: residues 124–138 (RCTQ…QDSQ) and 145–168 (PCQS…IQQW).

This Homo sapiens (Human) protein is Coiled-coil domain-containing protein 200.